The chain runs to 387 residues: Acetylajmalan esterase (387 aa).

Residues methionine 1 to glycine 22 form the signal peptide. Serine 36 functions as the Nucleophile in the catalytic mechanism. Asparagine 98, asparagine 180, asparagine 199, asparagine 249, and asparagine 296 each carry an N-linked (GlcNAc...) asparagine glycan. Catalysis depends on residues aspartate 337 and histidine 340.

Belongs to the 'GDSL' lipolytic enzyme family.

It catalyses the reaction 17-O-acetylajmaline + H2O = ajmaline + acetate + H(+). The enzyme catalyses 17-O-acetylnorajmaline + H2O = norajmaline + acetate + H(+). It participates in alkaloid biosynthesis; ajmaline biosynthesis. In terms of biological role, acetylesterase involved in the biosynthesis of ajmaline-type monoterpenoid indole alkaloids (MIAs) natural products, important plant-derived pharmaceuticals used in the therapy of heart disorders. Deacetylates 17-O-acetylajmaline and 17-O-acetylnorajmaline to produce ajmaline and norajmaline, but is inactive toward other acetylated alkaloids. This chain is Acetylajmalan esterase, found in Rauvolfia serpentina (Serpentine wood).